The sequence spans 421 residues: Thymidine phosphorylase (421 aa).

This sequence belongs to the thymidine/pyrimidine-nucleoside phosphorylase family. In terms of assembly, homodimer.

The enzyme catalyses thymidine + phosphate = 2-deoxy-alpha-D-ribose 1-phosphate + thymine. The enzymes which catalyze the reversible phosphorolysis of pyrimidine nucleosides are involved in the degradation of these compounds and in their utilization as carbon and energy sources, or in the rescue of pyrimidine bases for nucleotide synthesis. The protein is Thymidine phosphorylase (deoA) of Mycoplasma genitalium (strain ATCC 33530 / DSM 19775 / NCTC 10195 / G37) (Mycoplasmoides genitalium).